Here is a 223-residue protein sequence, read N- to C-terminus: UPF0641 membrane protein PJ4664.05 (223 aa).

The next 5 helical transmembrane spans lie at 10–30, 49–69, 81–101, 146–166, and 190–210; these read FNSF…FNWI, LTVL…FSDI, ILLY…WSIV, LSIG…MLWV, and TIFY…LKMV.

It belongs to the UPF0641 family.

It is found in the endoplasmic reticulum membrane. The chain is UPF0641 membrane protein PJ4664.05 from Schizosaccharomyces pombe (strain 972 / ATCC 24843) (Fission yeast).